A 288-amino-acid chain; its full sequence is ATP phosphoribosyltransferase (288 aa).

The protein belongs to the ATP phosphoribosyltransferase family. Long subfamily. Mg(2+) is required as a cofactor.

The protein localises to the cytoplasm. It carries out the reaction 1-(5-phospho-beta-D-ribosyl)-ATP + diphosphate = 5-phospho-alpha-D-ribose 1-diphosphate + ATP. It participates in amino-acid biosynthesis; L-histidine biosynthesis; L-histidine from 5-phospho-alpha-D-ribose 1-diphosphate: step 1/9. Its activity is regulated as follows. Feedback inhibited by histidine. Functionally, catalyzes the condensation of ATP and 5-phosphoribose 1-diphosphate to form N'-(5'-phosphoribosyl)-ATP (PR-ATP). Has a crucial role in the pathway because the rate of histidine biosynthesis seems to be controlled primarily by regulation of HisG enzymatic activity. The protein is ATP phosphoribosyltransferase (hisG) of Methanocaldococcus jannaschii (strain ATCC 43067 / DSM 2661 / JAL-1 / JCM 10045 / NBRC 100440) (Methanococcus jannaschii).